We begin with the raw amino-acid sequence, 150 residues long: Catabolic 3-dehydroquinase (150 aa).

Tyr-24 functions as the Proton acceptor in the catalytic mechanism. Substrate-binding residues include Asn-75, His-81, and Asp-88. His-101 acts as the Proton donor in catalysis. Residues 102 to 103 and Arg-112 contribute to the substrate site; that span reads IS.

This sequence belongs to the type-II 3-dehydroquinase family. As to quaternary structure, homododecamer. Adopts a ring-like structure, composed of an arrangement of two hexameric rings stacked on top of one another.

It carries out the reaction 3-dehydroquinate = 3-dehydroshikimate + H2O. It functions in the pathway aromatic compound metabolism; 3,4-dihydroxybenzoate biosynthesis; 3,4-dihydroxybenzoate from 3-dehydroquinate: step 1/2. Is involved in the catabolism of quinate. Allows the utilization of quinate as carbon source via the beta-ketoadipate pathway. This chain is Catabolic 3-dehydroquinase, found in Verticillium alfalfae (strain VaMs.102 / ATCC MYA-4576 / FGSC 10136) (Verticillium wilt of alfalfa).